A 217-amino-acid polypeptide reads, in one-letter code: Adenylate kinase (217 aa).

Residue 10–15 (GAGKGT) participates in ATP binding. The interval 30-59 (STGDMLRAAVKAGSPLGVKVKDIMASGQLV) is NMP. AMP contacts are provided by residues threonine 31, arginine 36, 57 to 59 (QLV), 85 to 88 (GFPR), and glutamine 92. Residues 122–159 (GRRVHEASGRIYHVTHNPPKTEGVDDITGEPLVQRDDD) form an LID region. ATP-binding positions include arginine 123 and 132-133 (IY). Residues arginine 156 and arginine 167 each coordinate AMP. Glycine 202 serves as a coordination point for ATP.

Belongs to the adenylate kinase family. As to quaternary structure, monomer.

The protein resides in the cytoplasm. It carries out the reaction AMP + ATP = 2 ADP. The protein operates within purine metabolism; AMP biosynthesis via salvage pathway; AMP from ADP: step 1/1. Its function is as follows. Catalyzes the reversible transfer of the terminal phosphate group between ATP and AMP. Plays an important role in cellular energy homeostasis and in adenine nucleotide metabolism. The polypeptide is Adenylate kinase (Teredinibacter turnerae (strain ATCC 39867 / T7901)).